A 210-amino-acid polypeptide reads, in one-letter code: Large ribosomal subunit protein uL3 (210 aa).

The segment at 125–151 is disordered; it reads HGFGGGPRTHGQSDRLRAPGSIGAGTD.

This sequence belongs to the universal ribosomal protein uL3 family. As to quaternary structure, part of the 50S ribosomal subunit. Forms a cluster with proteins L14 and L19.

One of the primary rRNA binding proteins, it binds directly near the 3'-end of the 23S rRNA, where it nucleates assembly of the 50S subunit. The polypeptide is Large ribosomal subunit protein uL3 (Roseiflexus sp. (strain RS-1)).